A 470-amino-acid chain; its full sequence is Argininosuccinate lyase (470 aa).

Belongs to the lyase 1 family. Argininosuccinate lyase subfamily.

It is found in the cytoplasm. It catalyses the reaction 2-(N(omega)-L-arginino)succinate = fumarate + L-arginine. Its pathway is amino-acid biosynthesis; L-arginine biosynthesis; L-arginine from L-ornithine and carbamoyl phosphate: step 3/3. This is Argininosuccinate lyase from Mycobacterium tuberculosis (strain ATCC 25618 / H37Rv).